A 238-amino-acid chain; its full sequence is Probable 2-phosphosulfolactate phosphatase (238 aa).

Belongs to the ComB family. The cofactor is Mg(2+).

The enzyme catalyses (2R)-O-phospho-3-sulfolactate + H2O = (2R)-3-sulfolactate + phosphate. This chain is Probable 2-phosphosulfolactate phosphatase, found in Carboxydothermus hydrogenoformans (strain ATCC BAA-161 / DSM 6008 / Z-2901).